A 131-amino-acid polypeptide reads, in one-letter code: Small ribosomal subunit protein uS8 (131 aa).

It belongs to the universal ribosomal protein uS8 family. In terms of assembly, part of the 30S ribosomal subunit. Contacts proteins S5 and S12.

Its function is as follows. One of the primary rRNA binding proteins, it binds directly to 16S rRNA central domain where it helps coordinate assembly of the platform of the 30S subunit. This Paraburkholderia xenovorans (strain LB400) protein is Small ribosomal subunit protein uS8.